Here is an 860-residue protein sequence, read N- to C-terminus: Tetratricopeptide repeat protein 13 (860 aa).

TPR repeat units lie at residues 143-176 (TNEE…EPDL), 216-248 (PEVF…LQPS), 249-282 (ARLY…NKNQ), 284-316 (IAML…KVDF), 317-350 (IDAY…NQNH), 352-384 (QTLQ…EPYN), and 386-418 (VCQY…DPLP).

The protein is Tetratricopeptide repeat protein 13 (TTC13) of Homo sapiens (Human).